The chain runs to 1103 residues: Ubiquitin carboxyl-terminal hydrolase 7 (1103 aa).

The segment covering 1–11 has biased composition (low complexity); sequence MNHQQQQQQQQ. 2 disordered regions span residues 1-41 and 46-65; these read MNHQ…TQNP and NVTL…DDTS. Residues 1–209 are interaction with TSPYL5; that stretch reads MNHQQQQQQQ…APHGVAWDSK (209 aa). Phosphoserine is present on Ser-19. A compositionally biased stretch (acidic residues) spans 20–32; the sequence is EPEDMEMEAGDTD. Ser-50 and Ser-54 each carry phosphoserine. The interval 54–209 is interaction with p53/TP53 and MDM2; sequence SNAEEDMEDD…APHGVAWDSK (156 aa). Residues 69-196 enclose the MATH domain; it reads EATFQFTVER…DDKVTFEVFV (128 aa). The tract at residues 71 to 206 is necessary for nuclear localization; it reads TFQFTVERFS…QADAPHGVAW (136 aa). The 308-residue stretch at 215–522 folds into the USP domain; it reads VGLKNQGATC…NAYMLVYIRE (308 aa). Cys-224 functions as the Nucleophile in the catalytic mechanism. His-465 (proton acceptor) is an active-site residue. An N6-acetyllysine; alternate modification is found at Lys-870. Residue Lys-870 forms a Glycyl lysine isopeptide (Lys-Gly) (interchain with G-Cter in SUMO2); alternate linkage. Residue Lys-870 forms a Glycyl lysine isopeptide (Lys-Gly) (interchain with G-Cter in ubiquitin); alternate linkage. Lys-883 is covalently cross-linked (Glycyl lysine isopeptide (Lys-Gly) (interchain with G-Cter in SUMO2)). A Phosphoserine modification is found at Ser-964. An N6-acetyllysine mark is found at Lys-1085 and Lys-1097.

Belongs to the peptidase C19 family. Monomer. Homodimer. Part of a complex with DAXX, MDM2, RASSF1 and USP7. Part of a complex with DAXX, MDM2 and USP7. Interacts with MDM2; the interaction is independent of p53/TP53. Interacts with DAXX; the interaction is direct and independent of MDM2 and p53/TP53. Component of a complex composed of KMT2E, OGT and USP7; the complex stabilizes KMT2E, preventing KMT2E ubiquitination and proteasomal-mediated degradation. Interacts (via MATH domain) with KMT2E. Interacts with OGT. Interacts with FOXO4; the interaction is enhanced in presence of hydrogen peroxide and occurs independently of p53/TP53. Interacts with p53/TP53; the interaction is enhanced in response to DNA damage; the interaction is impaired by TSPYL5. Interacts with PTEN; the interaction is direct. Interacts with ATXN1 and the strength of interaction is influenced by the length of the poly-Gln region in ATXN1. A weaker interaction seen with mutants having longer poly-Gln regions. Interacts with KIAA1530/UVSSA. Interacts with MEX3C and antagonizes its ability to degrade mRNA. Interacts with DNMT1 and UHRF1. Interacts with FOXP3. Interacts (via MATH domain) with RNF220. Associated component of the Polycomb group (PcG) multiprotein PRC1-like complex. Interacts with EPOP. Interacts with OTUD4 and USP9X; the interaction is direct. Interacts with CRY2. Interacts with REST. Interacts with ERCC6. Part of a complex consisting of USP7, MAGEL2 and TRIM27; directly interacts with MAGEL2; directly interacts with TRIM27. In terms of processing, polyneddylated. Post-translationally, not sumoylated. Polyubiquitinated. Ubiquitinated at Lys-870. Widely expressed. High expression is detected in brain, bone marrow, thymus and testis.

It localises to the nucleus. It is found in the cytoplasm. Its subcellular location is the PML body. The protein localises to the chromosome. It carries out the reaction Thiol-dependent hydrolysis of ester, thioester, amide, peptide and isopeptide bonds formed by the C-terminal Gly of ubiquitin (a 76-residue protein attached to proteins as an intracellular targeting signal).. In terms of biological role, hydrolase that deubiquitinates target proteins such as ARMC5, FOXO4, DEPTOR, KAT5, p53/TP53, MDM2, ERCC6, DNMT1, UHRF1, PTEN, KMT2E/MLL5 and DAXX. Together with DAXX, prevents MDM2 self-ubiquitination and enhances the E3 ligase activity of MDM2 towards p53/TP53, thereby promoting p53/TP53 ubiquitination and proteasomal degradation. Deubiquitinates p53/TP53, preventing degradation of p53/TP53, and enhances p53/TP53-dependent transcription regulation, cell growth repression and apoptosis. Deubiquitinates p53/TP53 and MDM2 and strongly stabilizes p53/TP53 even in the presence of excess MDM2, and also induces p53/TP53-dependent cell growth repression and apoptosis. Deubiquitination of FOXO4 in presence of hydrogen peroxide is not dependent on p53/TP53 and inhibits FOXO4-induced transcriptional activity. In association with DAXX, is involved in the deubiquitination and translocation of PTEN from the nucleus to the cytoplasm, both processes that are counteracted by PML. Deubiquitinates KMT2E preventing KMT2E proteasomal-mediated degradation. Involved in cell proliferation during early embryonic development. Involved in transcription-coupled nucleotide excision repair (TC-NER) in response to UV damage: recruited to DNA damage sites following interaction with KIAA1530/UVSSA and promotes deubiquitination of ERCC6, preventing UV-induced degradation of ERCC6. Involved in maintenance of DNA methylation via its interaction with UHRF1 and DNMT1: acts by mediating deubiquitination of UHRF1 and DNMT1, preventing their degradation and promoting DNA methylation by DNMT1. Deubiquitinates alkylation repair enzyme ALKBH3. OTUD4 recruits USP7 and USP9X to stabilize ALKBH3, thereby promoting the repair of alkylated DNA lesions. Acts as a chromatin regulator via its association with the Polycomb group (PcG) multiprotein PRC1-like complex; may act by deubiquitinating components of the PRC1-like complex. Able to mediate deubiquitination of histone H2B; it is however unsure whether this activity takes place in vivo. Exhibits a preference towards 'Lys-48'-linked ubiquitin chains. Increases regulatory T-cells (Treg) suppressive capacity by deubiquitinating and stabilizing the transcription factor FOXP3 which is crucial for Treg cell function. Plays a role in the maintenance of the circadian clock periodicity via deubiquitination and stabilization of the CRY1 and CRY2 proteins. Deubiquitinates REST, thereby stabilizing REST and promoting the maintenance of neural progenitor cells. Deubiquitinates SIRT7, inhibiting SIRT7 histone deacetylase activity and regulating gluconeogenesis. Involved in the regulation of WASH-dependent actin polymerization at the surface of endosomes and the regulation of endosomal protein recycling. It maintains optimal WASH complex activity and precise F-actin levels via deubiquitination of TRIM27 and WASHC1. Mediates the deubiquitination of phosphorylated DEPTOR, promoting its stability and leading to decreased mTORC1 signaling. This chain is Ubiquitin carboxyl-terminal hydrolase 7 (Usp7), found in Mus musculus (Mouse).